Reading from the N-terminus, the 110-residue chain is Thiosulfate sulfurtransferase GlpE (110 aa).

Positions 17-105 (KQEGAVVVDI…WRATYPAETA (89 aa)) constitute a Rhodanese domain. The active-site Cysteine persulfide intermediate is the Cys65.

It belongs to the GlpE family.

It localises to the cytoplasm. It carries out the reaction thiosulfate + hydrogen cyanide = thiocyanate + sulfite + 2 H(+). It catalyses the reaction thiosulfate + [thioredoxin]-dithiol = [thioredoxin]-disulfide + hydrogen sulfide + sulfite + 2 H(+). In terms of biological role, transferase that catalyzes the transfer of sulfur from thiosulfate to thiophilic acceptors such as cyanide or dithiols. May function in a CysM-independent thiosulfate assimilation pathway by catalyzing the conversion of thiosulfate to sulfite, which can then be used for L-cysteine biosynthesis. The chain is Thiosulfate sulfurtransferase GlpE from Pseudomonas putida (strain GB-1).